A 665-amino-acid chain; its full sequence is RNA polymerase II-associated protein 3 (665 aa).

Thr2 bears the N-acetylthreonine mark. One copy of the TPR 1 repeat lies at Ile8–Glu41. The segment at Gln37–Lys82 is disordered. Residues Ala69–Lys82 are compositionally biased toward basic and acidic residues. A phosphoserine mark is found at Ser87, Ser116, Ser119, and Ser121. The disordered stretch occupies residues Asp109–Asp129. TPR repeat units follow at residues Ala133–Asn166, Val168–Tyr200, Thr201–Asn234, Ala282–Asn315, Leu317–Tyr349, and Ser350–Asn383. A Phosphoserine modification is found at Ser481. A Glycyl lysine isopeptide (Lys-Gly) (interchain with G-Cter in SUMO2) cross-link involves residue Lys498.

It belongs to the RPAP3 family. As to quaternary structure, tightly associated with the RNA polymerase II complex. Component of the R2TP complex composed at least of RUVBL1, RUVBL2, RPAP3 and PIHD1. Component of the PAQosome complex which is responsible for the biogenesis of several protein complexes and which consists of R2TP complex members RUVBL1, RUVBL2, RPAP3 and PIH1D1, URI complex members PFDN2, PFDN6, PDRG1, UXT and URI1 as well as ASDURF, POLR2E and DNAAF10/WDR92. Interacts with PIH1D1. Interacts with TSC1 and TSC2. Interacts with PRPF8 and EFTUD2 in a ZNHIT2-dependent manner.

Forms an interface between the RNA polymerase II enzyme and chaperone/scaffolding protein, suggesting that it is required to connect RNA polymerase II to regulators of protein complex formation. In Homo sapiens (Human), this protein is RNA polymerase II-associated protein 3 (RPAP3).